Reading from the N-terminus, the 622-residue chain is Low affinity potassium transport system protein Kup (622 aa).

Helical transmembrane passes span 9-29 (LPAI…TSPL), 49-69 (VFGF…IKYL), 103-123 (VIMG…TPAI), 137-157 (PQLD…LFMI), 165-185 (VGKL…GLGL), 213-233 (VSFI…ALYA), 247-267 (WFTV…ALLL), 276-296 (PFFL…AALA), 337-357 (IYIP…IVSF), 363-383 (LAAA…ILST), 396-416 (FVAL…TANL), and 419-439 (LLSG…VMTT).

The protein belongs to the HAK/KUP transporter (TC 2.A.72) family.

It is found in the cell inner membrane. It catalyses the reaction K(+)(in) + H(+)(in) = K(+)(out) + H(+)(out). Its function is as follows. Responsible for the low-affinity transport of potassium into the cell. Likely operates as a K(+):H(+) symporter. The protein is Low affinity potassium transport system protein Kup of Shigella boydii serotype 18 (strain CDC 3083-94 / BS512).